A 518-amino-acid chain; its full sequence is G1/S-specific cyclin-E (518 aa).

Residues 1-193 (MAGRKSSRTT…DEETEDEFDL (193 aa)) are disordered. Residues 13 to 46 (PVKKAERKSAILSPHDELRERLLETSLDVKENIP) are compositionally biased toward basic and acidic residues. Residues 47-62 (ERSSSTRNESVGSQRS) are compositionally biased toward polar residues. Residues 82–107 (PSTEKKGNGSRDDSFSSVFSEDRETE) are compositionally biased toward basic and acidic residues. Residues 108–119 (SSVGSTSSRTRG) show a composition bias toward low complexity. Residues 135 to 154 (SSDHNAESEESRETPQSDEH) show a composition bias toward basic and acidic residues. A compositionally biased stretch (acidic residues) spans 155–192 (DGFEEDGDVEDDVSSDVNDEEDEYDEYEEDEETEDEFD).

It belongs to the cyclin family. Cyclin E subfamily. As to quaternary structure, interacts with a member of the CDK2/CDK protein kinases to form a serine/threonine kinase holoenzyme complex. The cyclin subunit imparts substrate specificity to the complex.

The protein localises to the nucleus. The protein resides in the cytoplasm. It localises to the cytoskeleton. It is found in the microtubule organizing center. Its subcellular location is the centrosome. The protein localises to the centriole. In terms of biological role, essential for the control of the cell cycle at the G1/S (start) transition. In association with cdk-2, regulates proliferation, quiescent state and cell fate during the development of several cell lineages. In the embryo, initiates the establishment of cell polarity through the recruitment of the centrosomal proteins spd-2 and spd-5 during prophase. During the development of the vulva, controls the onset of vulval cell terminal differentiation by controlling the duration of G1 phase. During hypoderm development at early larval stages, controls syncytial fate of seam cell daughter cells. Involved in the progression of cell division in the intestinal lineage in larvae, and in particular in endoreplication, a specific growth pathway in the intestinal epithelium, required for feeding and gut development in growing larvae. By controlling the activity of translational repressor gld-1, regulates the pool of germline stem cells and the size of the mitotic zone by preventing entry into meiosis. In addition, repression of expression by gld-1 prevents mitosis re-entry in meiotic germline cells. This is G1/S-specific cyclin-E (cye-1) from Caenorhabditis briggsae.